The sequence spans 241 residues: DNA-binding dual master transcriptional regulator RpaA (241 aa).

The Response regulatory domain occupies 3–119 (RILIIDDDPA…EMLARVRALL (117 aa)). D52 carries the post-translational modification 4-aspartylphosphate. Positions 132 to 231 (SEILNQGPLT…VYGAGYCLEL (100 aa)) form a DNA-binding region, ompR/PhoB-type.

As to quaternary structure, interacts with reduced ferredoxin (petF). Interacts with CikA, RpaB, SasA, Sll0038 (pixG) and a number of other proteins. Phosphorylated by SasA; phosphorylation is maximal when KaiC phosphorylation is active during the circadian cycle. Dephosphorylated by CikA. CikA and SasA cooperation generates RpaA activity oscillation that is distinct from that generated by CikA or SasA alone and offset from the rhythm of KaiC phosphorylation.

It localises to the cytoplasm. In terms of biological role, response regulator of 2 two-component regulatory systems SasA/RpaA and CikA/RpaA involved in genome-wide circadian gene expression. The histidine kinases have opposing effects modulated by the clock oscillator proteins; SasA phosphorylates RpaA (stimulated by fully phosphorylated KaiC1) while CikA dephosphorylates phospho-RpaA (stimulated by the phospho-Ser-432-KaiC1-KaiB complex). The RpaA regulon is about 300 genes, and includes itself, cikA, sigE, sigG, genes involved in photosynthesis, carbon metabolism in the light and dark, phototaxis, CRISPR arrays 2 and 3 as well as nearly 90 ncRNAs. Genes are up- or down-regulated in its absence. Involved in regulation of primary sugar and amino acid metabolism and in adaptation to light changes. Regulates the accumulation of the monomeric photosystem I and the D1 protein under high light conditions. Overexpression causes cells to grow more slowly, increases levels of transcripts for clock oscillator genes in the light and the dark, increases levels of SigE protein, increases accumulation of sugar catabolic enzymes in the dark with concomitant decreases in most sugar metabolites. Plays a role in cell division; overexpression from the psbAII promoter increases expression of some cell-division-related genes, alters cell volume and changes the outer cell membrane and cell wall appearance. The polypeptide is DNA-binding dual master transcriptional regulator RpaA (Synechocystis sp. (strain ATCC 27184 / PCC 6803 / Kazusa)).